Here is a 287-residue protein sequence, read N- to C-terminus: Tetraspanning orphan receptor (287 aa).

The Extracellular portion of the chain corresponds to M1–Y27. A helical transmembrane segment spans residues I28–I48. At T49–L55 the chain is on the cytoplasmic side. The helical transmembrane segment at L56–F76 threads the bilayer. Residues M77–T91 lie on the Extracellular side of the membrane. Residues G92–A114 form a helical membrane-spanning segment. The Cytoplasmic portion of the chain corresponds to F115–C287. Residues N165 to P190 form a disordered region.

As to quaternary structure, interacts (via N-terminal extracellular domain) with human C2a.

The protein localises to the cell membrane. In terms of biological role, cell surface receptor that binds to human complement C2a protein. This results in inhibition of the classical and lectin pathways of complement activation, probably due to interference with binding of C2a to C4b and interference with cleavage by C1 or MASP2 such that C3 convertase cannot be formed. This infers resistance to complement-mediated cell lysis, allowing parasite survival and infection. This chain is Tetraspanning orphan receptor, found in Trypanosoma cruzi.